The sequence spans 56 residues: UPF0339 protein NMA1193/NMA1859 (56 aa).

Belongs to the UPF0339 family.

The polypeptide is UPF0339 protein NMA1193/NMA1859 (Neisseria meningitidis serogroup A / serotype 4A (strain DSM 15465 / Z2491)).